The chain runs to 395 residues: Na(+)/H(+) antiporter NhaA (395 aa).

12 helical membrane passes run 18–38, 64–84, 100–120, 129–149, 160–180, 182–202, 205–225, 226–246, 266–286, 295–315, 333–353, and 368–388; these read AGGI…NSPL, LLMW…GLEV, IFPA…YWLV, GGWA…LVLL, FLLA…ALFF, HDLS…LILL, FKVS…VSVL, KSGV…PLKG, FLIL…GLGM, LGVT…FSYL, IFAV…LASL, and LGIL…LFVT.

This sequence belongs to the NhaA Na(+)/H(+) (TC 2.A.33) antiporter family.

Its subcellular location is the cell inner membrane. The enzyme catalyses Na(+)(in) + 2 H(+)(out) = Na(+)(out) + 2 H(+)(in). Na(+)/H(+) antiporter that extrudes sodium in exchange for external protons. The sequence is that of Na(+)/H(+) antiporter NhaA from Histophilus somni (strain 129Pt) (Haemophilus somnus).